The sequence spans 308 residues: Glucan 1,3-beta-glucosidase ARB_02797 (308 aa).

A signal peptide spans 1 to 20 (MRFSTALSLALAVSPAAVFA). The active-site Proton donor is E120. N126 carries N-linked (GlcNAc...) asparagine glycosylation. E220 acts as the Nucleophile in catalysis.

Belongs to the glycosyl hydrolase 17 family.

Its subcellular location is the secreted. It is found in the cell wall. The protein localises to the cytoplasm. The enzyme catalyses Successive hydrolysis of beta-D-glucose units from the non-reducing ends of (1-&gt;3)-beta-D-glucans, releasing alpha-glucose.. Functionally, cell wall glucan 1,3-beta-glucosidase involved in cell wall biosynthesis and virulence. Crucial for delivery of beta-1,3-glucan to the biofilm matrix and for accumulation of mature matrix biomass. This is Glucan 1,3-beta-glucosidase ARB_02797 from Arthroderma benhamiae (strain ATCC MYA-4681 / CBS 112371) (Trichophyton mentagrophytes).